We begin with the raw amino-acid sequence, 379 residues long: 2-dehydropantoate 2-reductase (379 aa).

NADP(+)-binding positions include 13 to 18 and Asn-119; that span reads GLGAMG. Substrate is bound at residue Asn-119. The active-site Proton donor is the Lys-224. Substrate is bound by residues Asn-228, Asn-232, and Ser-316. An NADP(+)-binding site is contributed by Glu-328.

Belongs to the ketopantoate reductase family.

The catalysed reaction is (R)-pantoate + NADP(+) = 2-dehydropantoate + NADPH + H(+). It participates in cofactor biosynthesis; (R)-pantothenate biosynthesis; (R)-pantoate from 3-methyl-2-oxobutanoate: step 2/2. In terms of biological role, catalyzes the NADPH-dependent reduction of ketopantoate into pantoic acid. This chain is 2-dehydropantoate 2-reductase (PAN5), found in Saccharomyces cerevisiae (strain ATCC 204508 / S288c) (Baker's yeast).